The primary structure comprises 41 residues: MNRLIELTGWIVLVVSVILLGVASHIDNYQPPEQSASVQHK.

Residues 1-3 (MNR) are Cytoplasmic-facing. The chain crosses the membrane as a helical span at residues 4-24 (LIELTGWIVLVVSVILLGVAS). Topologically, residues 25 to 41 (HIDNYQPPEQSASVQHK) are periplasmic.

Interacts with FtsL and several other divisomal proteins, including FtsI, FtsK, FtsN, FtsQ, FtsW and YmgF. Post-translationally, the N-terminus is blocked.

The protein localises to the cell inner membrane. Functionally, component of the cell division machinery, which is probably involved in the stabilization of the divisome under certain stress conditions. In Escherichia coli (strain K12), this protein is Divisome-associated membrane protein Blr (blr).